We begin with the raw amino-acid sequence, 261 residues long: 5'-nucleotidase SurE (261 aa).

A divalent metal cation is bound by residues Asp-8, Asp-9, Ser-43, and Asn-96.

Belongs to the SurE nucleotidase family. It depends on a divalent metal cation as a cofactor.

Its subcellular location is the cytoplasm. The catalysed reaction is a ribonucleoside 5'-phosphate + H2O = a ribonucleoside + phosphate. Functionally, nucleotidase that shows phosphatase activity on nucleoside 5'-monophosphates. The sequence is that of 5'-nucleotidase SurE from Cereibacter sphaeroides (strain ATCC 17023 / DSM 158 / JCM 6121 / CCUG 31486 / LMG 2827 / NBRC 12203 / NCIMB 8253 / ATH 2.4.1.) (Rhodobacter sphaeroides).